The sequence spans 1481 residues: Chromosome partition protein MukB (1481 aa).

34–41 serves as a coordination point for ATP; that stretch reads GGNGAGKS. Coiled-coil stretches lie at residues 338–480, 509–604, 780–805, 835–1116, and 1210–1265; these read SLVQ…QAYQ, QHLA…APVW, RAAR…ATLS, EAEI…AKAG, and EAIE…LQAV. A flexible hinge region spans residues 666–783; sequence PSGAEDSRMI…EVPLFGRAAR (118 aa).

This sequence belongs to the SMC family. MukB subfamily. Homodimerization via its hinge domain. Binds to DNA via its C-terminal region. Interacts, and probably forms a ternary complex, with MukE and MukF via its C-terminal region. The complex formation is stimulated by calcium or magnesium. Interacts with tubulin-related protein FtsZ.

Its subcellular location is the cytoplasm. It is found in the nucleoid. Functionally, plays a central role in chromosome condensation, segregation and cell cycle progression. Functions as a homodimer, which is essential for chromosome partition. Involved in negative DNA supercoiling in vivo, and by this means organize and compact chromosomes. May achieve or facilitate chromosome segregation by condensation DNA from both sides of a centrally located replisome during cell division. This is Chromosome partition protein MukB from Yersinia enterocolitica serotype O:8 / biotype 1B (strain NCTC 13174 / 8081).